The chain runs to 79 residues: MQKLTILLLVAAVLMSTQALIRGGVEKRQEAKRNFFSKRKTTAESWWEGECRTWYAPCNFPSQCCSEVCSSKTGRCLTW.

The first 19 residues, 1-19, serve as a signal peptide directing secretion; sequence MQKLTILLLVAAVLMSTQA. Positions 20–50 are excised as a propeptide; that stretch reads LIRGGVEKRQEAKRNFFSKRKTTAESWWEGE. 3 disulfide bridges follow: cysteine 51/cysteine 65, cysteine 58/cysteine 69, and cysteine 64/cysteine 76.

It belongs to the conotoxin O2 superfamily. In terms of tissue distribution, expressed by the venom duct.

The protein resides in the secreted. The protein is Conotoxin VnMEKL-024 of Conus ventricosus (Mediterranean cone).